Here is a 307-residue protein sequence, read N- to C-terminus: Coproporphyrin III ferrochelatase (307 aa).

Fe-coproporphyrin III contacts are provided by residues Y12, R29, 45 to 46 (RY), S53, and Y124. Fe(2+) is bound by residues H181 and E263.

This sequence belongs to the ferrochelatase family.

The protein resides in the cytoplasm. It catalyses the reaction Fe-coproporphyrin III + 2 H(+) = coproporphyrin III + Fe(2+). The protein operates within porphyrin-containing compound metabolism; protoheme biosynthesis. In terms of biological role, involved in coproporphyrin-dependent heme b biosynthesis. Catalyzes the insertion of ferrous iron into coproporphyrin III to form Fe-coproporphyrin III. The chain is Coproporphyrin III ferrochelatase from Staphylococcus aureus (strain MRSA252).